The chain runs to 102 residues: Thioredoxin (102 aa).

The region spanning 1–102 (MVKVVSAENF…SLIRLINQHS (102 aa)) is the Thioredoxin domain. Residues Cys-28 and Cys-31 are joined by a disulfide bond.

The protein belongs to the thioredoxin family.

Participates in various redox reactions through the reversible oxidation of its active center dithiol to a disulfide and catalyzes dithiol-disulfide exchange reactions. This is Thioredoxin (trxA) from Chlamydia caviae (strain ATCC VR-813 / DSM 19441 / 03DC25 / GPIC) (Chlamydophila caviae).